A 117-amino-acid polypeptide reads, in one-letter code: Hainantoxin-XV.2 (117 aa).

The N-terminal stretch at M1 to S20 is a signal peptide. The segment at A18–E55 is disordered. Positions S21–R56 are excised as a propeptide. The span at N23 to E55 shows a compositional bias: basic and acidic residues. 4 cysteine pairs are disulfide-bonded: C58-C72, C65-C78, C69-C115, and C71-C91.

Belongs to the neurotoxin 03 (Tx2) family. 02 subfamily. HNTX-XV sub-subfamily. Expressed by the venom gland.

It localises to the secreted. Its function is as follows. Putative ion channel inhibitor. This is Hainantoxin-XV.2 from Cyriopagopus hainanus (Chinese bird spider).